Reading from the N-terminus, the 223-residue chain is Putative germin-like protein 2-3 (223 aa).

Residues 1–28 form the signal peptide; it reads MAAIRASFLLAAAALLALWCSDHGGVVA. A disulfide bond links Cys-38 and Cys-53. The Cupin type-1 domain maps to 67 to 217; sequence SGLHMAGNTT…AFQVEKTVVD (151 aa). The N-linked (GlcNAc...) asparagine glycan is linked to Asn-74. Mn(2+) contacts are provided by His-115, His-117, Glu-122, and His-163.

Belongs to the germin family. Oligomer (believed to be a pentamer but probably hexamer).

Its subcellular location is the secreted. It localises to the extracellular space. The protein resides in the apoplast. Functionally, may play a role in plant defense. Probably has no oxalate oxidase activity even if the active site is conserved. This is Putative germin-like protein 2-3 from Oryza sativa subsp. japonica (Rice).